We begin with the raw amino-acid sequence, 505 residues long: ATP synthase subunit alpha (505 aa).

169-176 (GDRQTGKT) is a binding site for ATP.

This sequence belongs to the ATPase alpha/beta chains family. In terms of assembly, F-type ATPases have 2 components, CF(1) - the catalytic core - and CF(0) - the membrane proton channel. CF(1) has five subunits: alpha(3), beta(3), gamma(1), delta(1), epsilon(1). CF(0) has three main subunits: a(1), b(2) and c(9-12). The alpha and beta chains form an alternating ring which encloses part of the gamma chain. CF(1) is attached to CF(0) by a central stalk formed by the gamma and epsilon chains, while a peripheral stalk is formed by the delta and b chains.

It localises to the cell membrane. The catalysed reaction is ATP + H2O + 4 H(+)(in) = ADP + phosphate + 5 H(+)(out). Functionally, produces ATP from ADP in the presence of a proton gradient across the membrane. The alpha chain is a regulatory subunit. The chain is ATP synthase subunit alpha from Alkaliphilus metalliredigens (strain QYMF).